The chain runs to 1138 residues: Nuclear pore complex-interacting protein family member B4 (1138 aa).

Residues 63-87 (VIIAFPTSYKVVITLWIVYLWVSLL) form a helical membrane-spanning segment. Disordered regions lie at residues 241–263 (NRMGHQPPPPTQQHSITDNSLSL), 291–620 (TPLP…NIKT), and 873–1138 (ERLR…RRLS). Over residues 252–262 (QQHSITDNSLS) the composition is skewed to polar residues. A compositionally biased stretch (pro residues) spans 349-359 (PLPPSALPSAP). 8 stretches are compositionally biased toward basic and acidic residues: residues 406-416 (DNIKTPAERLR), 448-458 (DNIKTPAERLR), 490-500 (DNIKTPAERLR), 532-542 (DNIKTPAERLR), 574-584 (DNIKTPAERLR), 908-918 (DNIKTPAERLR), 950-960 (DNIKTPAERLR), and 992-1002 (DNIKTPAERLR).

The protein belongs to the NPIP family.

It is found in the membrane. The sequence is that of Nuclear pore complex-interacting protein family member B4 (NPIPB4) from Homo sapiens (Human).